The following is a 179-amino-acid chain: TPD1 protein homolog 1 (179 aa).

An N-terminal signal peptide occupies residues 1-30 (MRMEHIYKFQHWLFFIGLGVLLSLSLSVKA).

This chain is TPD1 protein homolog 1, found in Arabidopsis thaliana (Mouse-ear cress).